We begin with the raw amino-acid sequence, 773 residues long: C-Maf-inducing protein (773 aa).

The segment at 1–30 is disordered; it reads MDVTSSSGGGGDPRQIEETKPLLGGDVSAP. One can recognise a PH domain in the interval 54–163; the sequence is LLQEGDIQVC…HSLQWKKKIY (110 aa). Ser-349, Ser-377, Ser-382, and Ser-660 each carry phosphoserine. 4 LRR repeats span residues 663 to 686, 687 to 707, 712 to 732, and 736 to 756; these read NLEN…IKLP, SLKQ…RLLS, MLQV…LALS, and SLCS…EDLK.

In terms of assembly, interacts with FLNA. As to expression, isoform 1 is expressed in peripheral blood mononuclear cells and kidney. Lower expression in brain and liver. Expression is down-regulated in activated cells. Isoform 2 is expressed in lymphocyte precursors, however, expression shuts down during maturation and differentiation in thymus and fetal liver.

The protein resides in the nucleus. It localises to the cytoplasm. In terms of biological role, plays a role in T-cell signaling pathway. Isoform 2 may play a role in T-helper 2 (Th2) signaling pathway and seems to represent the first proximal signaling protein that links T-cell receptor-mediated signal to the activation of c-Maf Th2 specific factor. The sequence is that of C-Maf-inducing protein (CMIP) from Homo sapiens (Human).